The chain runs to 350 residues: METNILELRNISKQYDGKVVLKGINLNIKEGEFVTLLGPSGCGKTTTLRIIAGFEQPNSGELLFLGKDYLKTPVHKREVNTVFQNYALFPHLTVFDNIAYGLKVKRNKYDVIETEVKKFLQLVGLEGFEDKSVEQLSGGQRQRVALARALINKPRVLLLDEPMAALDVKLRKKMQAELKALQGEIGITFILVTHDQEEALTLSDRIIVMNDGAIQQVGTPAEIYNEPENLWTAQFIGDSNIISNAIFIKDNLVTIDGKKIVCVDRGFGENENQIDIIIRPEDIDIVPVGKGFFTGTVKRVNFKGVHWEIIVKCKERKYLIHSTDRVEEGDQVDISWNVEDIHVMWKEIDD.

Positions 6 to 236 (LELRNISKQY…PENLWTAQFI (231 aa)) constitute an ABC transporter domain. 38–45 (GPSGCGKT) is an ATP binding site.

Belongs to the ABC transporter superfamily. Spermidine/putrescine importer (TC 3.A.1.11.1) family. As to quaternary structure, the complex is composed of two ATP-binding proteins (PotA), two transmembrane proteins (PotB and PotC) and a solute-binding protein (PotD).

It is found in the cell membrane. The enzyme catalyses ATP + H2O + polyamine-[polyamine-binding protein]Side 1 = ADP + phosphate + polyamineSide 2 + [polyamine-binding protein]Side 1.. In terms of biological role, part of the ABC transporter complex PotABCD involved in spermidine/putrescine import. Responsible for energy coupling to the transport system. This chain is Spermidine/putrescine import ATP-binding protein PotA, found in Spiroplasma citri.